Here is a 701-residue protein sequence, read N- to C-terminus: 1,4-alpha-glucan branching enzyme GlgB (701 aa).

Asp381 functions as the Nucleophile in the catalytic mechanism. Catalysis depends on Glu434, which acts as the Proton donor.

The protein belongs to the glycosyl hydrolase 13 family. GlgB subfamily. Monomer.

It catalyses the reaction Transfers a segment of a (1-&gt;4)-alpha-D-glucan chain to a primary hydroxy group in a similar glucan chain.. It participates in glycan biosynthesis; glycogen biosynthesis. In terms of biological role, catalyzes the formation of the alpha-1,6-glucosidic linkages in glycogen by scission of a 1,4-alpha-linked oligosaccharide from growing alpha-1,4-glucan chains and the subsequent attachment of the oligosaccharide to the alpha-1,6 position. The polypeptide is 1,4-alpha-glucan branching enzyme GlgB (Jannaschia sp. (strain CCS1)).